A 316-amino-acid chain; its full sequence is Protoheme IX farnesyltransferase (316 aa).

The next 9 membrane-spanning stretches (helical) occupy residues 32–52 (VMSL…GHIH), 53–73 (PVLG…SGAL), 93–113 (IPAG…LSGF), 116–136 (VILG…TIFF), 152–172 (NIVI…ACVT), 180–200 (TVLF…LALF), 221–241 (VTKH…ILPS), 252–271 (LVAA…VWRM), and 289–309 (IFYL…SIFV).

This sequence belongs to the UbiA prenyltransferase family. Protoheme IX farnesyltransferase subfamily.

Its subcellular location is the cell inner membrane. The catalysed reaction is heme b + (2E,6E)-farnesyl diphosphate + H2O = Fe(II)-heme o + diphosphate. Its pathway is porphyrin-containing compound metabolism; heme O biosynthesis; heme O from protoheme: step 1/1. Converts heme B (protoheme IX) to heme O by substitution of the vinyl group on carbon 2 of heme B porphyrin ring with a hydroxyethyl farnesyl side group. In Rhizobium leguminosarum bv. trifolii (strain WSM2304), this protein is Protoheme IX farnesyltransferase.